The chain runs to 144 residues: Putative pre-16S rRNA nuclease (144 aa).

The protein belongs to the YqgF nuclease family.

The protein resides in the cytoplasm. In terms of biological role, could be a nuclease involved in processing of the 5'-end of pre-16S rRNA. The protein is Putative pre-16S rRNA nuclease of Wigglesworthia glossinidia brevipalpis.